Reading from the N-terminus, the 119-residue chain is Ribonuclease P protein component (119 aa).

It belongs to the RnpA family. As to quaternary structure, consists of a catalytic RNA component (M1 or rnpB) and a protein subunit.

It carries out the reaction Endonucleolytic cleavage of RNA, removing 5'-extranucleotides from tRNA precursor.. Its function is as follows. RNaseP catalyzes the removal of the 5'-leader sequence from pre-tRNA to produce the mature 5'-terminus. It can also cleave other RNA substrates such as 4.5S RNA. The protein component plays an auxiliary but essential role in vivo by binding to the 5'-leader sequence and broadening the substrate specificity of the ribozyme. The polypeptide is Ribonuclease P protein component (Shewanella woodyi (strain ATCC 51908 / MS32)).